Here is a 352-residue protein sequence, read N- to C-terminus: Ion-translocating oxidoreductase complex subunit D (352 aa).

The next 4 membrane-spanning stretches (helical) occupy residues 20-40 (IMLL…WFFG), 42-62 (GTLF…AIVL), 69-91 (VASH…SIPP), and 123-143 (PAMI…TSWL). Residue Thr187 is modified to FMN phosphoryl threonine. Transmembrane regions (helical) follow at residues 215–235 (LAGV…VFLL), 242–262 (WHIP…GWLF), 267–287 (LASP…FFIL), 301–321 (LIFG…GGYP), and 322–342 (DGVA…DYYT).

This sequence belongs to the NqrB/RnfD family. The complex is composed of six subunits: RsxA, RsxB, RsxC, RsxD, RsxE and RsxG. The cofactor is FMN.

It localises to the cell inner membrane. Its function is as follows. Part of a membrane-bound complex that couples electron transfer with translocation of ions across the membrane. Required to maintain the reduced state of SoxR. This chain is Ion-translocating oxidoreductase complex subunit D, found in Salmonella enteritidis PT4 (strain P125109).